The sequence spans 69 residues: Conotoxin Eb6.1 (69 aa).

Positions 1 to 17 (VLIIAVLFLTACQLTTA) are cleaved as a signal peptide. Positions 18-41 (ETYSRGRQKHRARRSTDKNSKWTR) are excised as a propeptide. 3 disulfides stabilise this stretch: C43-C57, C50-C61, and C56-C68.

Belongs to the conotoxin O1 superfamily. In terms of tissue distribution, expressed by the venom duct.

It localises to the secreted. This chain is Conotoxin Eb6.1 (E1), found in Conus ebraeus (Hebrew cone).